Reading from the N-terminus, the 341-residue chain is tRNA N6-adenosine threonylcarbamoyltransferase (341 aa).

The Fe cation site is built by H117 and H121. Substrate is bound by residues 140 to 144 (VVSGG), D173, G186, and N278. D306 is a binding site for Fe cation.

It belongs to the KAE1 / TsaD family. It depends on Fe(2+) as a cofactor.

It localises to the cytoplasm. The catalysed reaction is L-threonylcarbamoyladenylate + adenosine(37) in tRNA = N(6)-L-threonylcarbamoyladenosine(37) in tRNA + AMP + H(+). In terms of biological role, required for the formation of a threonylcarbamoyl group on adenosine at position 37 (t(6)A37) in tRNAs that read codons beginning with adenine. Is involved in the transfer of the threonylcarbamoyl moiety of threonylcarbamoyl-AMP (TC-AMP) to the N6 group of A37, together with TsaE and TsaB. TsaD likely plays a direct catalytic role in this reaction. This is tRNA N6-adenosine threonylcarbamoyltransferase from Symbiobacterium thermophilum (strain DSM 24528 / JCM 14929 / IAM 14863 / T).